We begin with the raw amino-acid sequence, 294 residues long: tRNA dimethylallyltransferase (294 aa).

ATP is bound at residue 10 to 17 (GPTAVGKT). Residue 12 to 17 (TAVGKT) coordinates substrate. Residues 35–38 (DSQQ) are interaction with substrate tRNA.

This sequence belongs to the IPP transferase family. In terms of assembly, monomer. Mg(2+) serves as cofactor.

The enzyme catalyses adenosine(37) in tRNA + dimethylallyl diphosphate = N(6)-dimethylallyladenosine(37) in tRNA + diphosphate. Its function is as follows. Catalyzes the transfer of a dimethylallyl group onto the adenine at position 37 in tRNAs that read codons beginning with uridine, leading to the formation of N6-(dimethylallyl)adenosine (i(6)A). The protein is tRNA dimethylallyltransferase of Streptococcus pneumoniae serotype 19F (strain G54).